A 746-amino-acid polypeptide reads, in one-letter code: Protein Niban 2 (746 aa).

The N-myristoyl glycine moiety is linked to residue glycine 2. The region spanning 68–192 (RIVFSGNLFQ…WQAVLQDCIR (125 aa)) is the PH domain. Phosphoserine occurs at positions 568, 574, 601, and 603. A disordered region spans residues 590 to 746 (GEEYSNSGGG…EDSAGVQTEF (157 aa)). Threonine 606 carries the phosphothreonine modification. 9 positions are modified to phosphoserine: serine 609, serine 624, serine 638, serine 641, serine 646, serine 665, serine 681, serine 692, and serine 696. Residues 671 to 693 (PLLNGAPAGESPQPKAAPEASSP) show a composition bias toward low complexity. Positions 720–746 (GEQVSSPSSHPALHTTTEDSAGVQTEF) are enriched in polar residues.

This sequence belongs to the Niban family. Phosphorylated at Ser-641, Ser-646, Ser-692 and Ser-696 by the BRAF/MKK/ERK signaling cascade. In melanoma cells, the C-terminal phosphorylation may prevent targeting to the plasma membrane. Post-translationally, as apoptosis proceeds, degraded via an proteasome-independent pathway, probably by caspases.

The protein resides in the cytoplasm. It is found in the cytosol. It localises to the cell junction. Its subcellular location is the adherens junction. The protein localises to the membrane. Its function is as follows. May play a role in apoptosis suppression. May promote melanoma cell invasion in vitro. The chain is Protein Niban 2 from Homo sapiens (Human).